The chain runs to 101 residues: MKPGEIIAAEGTIELNAGQPTVTIEVANSGDRPVQVGSHYHFFETNAGLLFDRDKARGMRLDIPAGTAVRFEPGQKREVTLVPLSGKREVYGFRQQIMGRL.

It belongs to the urease beta subunit family. Heterotrimer of UreA (gamma), UreB (beta) and UreC (alpha) subunits. Three heterotrimers associate to form the active enzyme.

Its subcellular location is the cytoplasm. It carries out the reaction urea + 2 H2O + H(+) = hydrogencarbonate + 2 NH4(+). It participates in nitrogen metabolism; urea degradation; CO(2) and NH(3) from urea (urease route): step 1/1. This Agrobacterium fabrum (strain C58 / ATCC 33970) (Agrobacterium tumefaciens (strain C58)) protein is Urease subunit beta.